Reading from the N-terminus, the 145-residue chain is uncharacterized protein (145 aa).

Residues 62–145 (LPSVGGRMTA…QLPQQGGCPG (84 aa)) are disordered. A compositionally biased stretch (pro residues) spans 84-95 (ASSPEDPPLPHP).

This is an uncharacterized protein from Homo sapiens (Human).